A 224-amino-acid chain; its full sequence is MKFPVLILNFKAYAEAAGRRAVEIAKAAERVAKELGVNIAVAPNHLELALVAQSVEIPVYAQGVDVESPGAHTAHVALGNLKEAGAAGVILNHSEAPLRLNELARYVGKARELGLDVVVCAPDPTTSLAAAALGPHAVAVEPPELIGTGRAVSRYKPETVVQTVQLVAKHFADVAVITGAGIESGEDVEAALRLGTRGVLLASAAVKAKDHYQKIMELAKPLLK.

9–11 (NFK) serves as a coordination point for substrate. The active-site Electrophile is H93. The active-site Proton acceptor is E141. Substrate-binding positions include I146, G181, and 202 to 203 (AS).

Belongs to the triosephosphate isomerase family. As to quaternary structure, homotetramer; dimer of dimers.

The protein localises to the cytoplasm. The catalysed reaction is D-glyceraldehyde 3-phosphate = dihydroxyacetone phosphate. Its pathway is carbohydrate biosynthesis; gluconeogenesis. It participates in carbohydrate degradation; glycolysis; D-glyceraldehyde 3-phosphate from glycerone phosphate: step 1/1. Involved in the gluconeogenesis. Catalyzes stereospecifically the conversion of dihydroxyacetone phosphate (DHAP) to D-glyceraldehyde-3-phosphate (G3P). The chain is Triosephosphate isomerase from Pyrobaculum arsenaticum (strain DSM 13514 / JCM 11321 / PZ6).